We begin with the raw amino-acid sequence, 158 residues long: NADH-quinone oxidoreductase subunit B (158 aa).

C37, C38, C102, and C132 together coordinate [4Fe-4S] cluster.

The protein belongs to the complex I 20 kDa subunit family. As to quaternary structure, NDH-1 is composed of 14 different subunits. Subunits NuoB, C, D, E, F, and G constitute the peripheral sector of the complex. The cofactor is [4Fe-4S] cluster.

It localises to the cell inner membrane. It catalyses the reaction a quinone + NADH + 5 H(+)(in) = a quinol + NAD(+) + 4 H(+)(out). Its function is as follows. NDH-1 shuttles electrons from NADH, via FMN and iron-sulfur (Fe-S) centers, to quinones in the respiratory chain. Couples the redox reaction to proton translocation (for every two electrons transferred, four hydrogen ions are translocated across the cytoplasmic membrane), and thus conserves the redox energy in a proton gradient. The chain is NADH-quinone oxidoreductase subunit B from Hydrogenovibrio crunogenus (strain DSM 25203 / XCL-2) (Thiomicrospira crunogena).